We begin with the raw amino-acid sequence, 164 residues long: Protein SprT (164 aa).

In terms of domain architecture, SprT-like spans 14 to 156 (QLAESFFKRP…LCRRCRQTLV (143 aa)). Position 69 (H69) interacts with Zn(2+). Residue E70 is part of the active site. Position 73 (H73) interacts with Zn(2+).

The protein belongs to the SprT family. The cofactor is Zn(2+).

It localises to the cytoplasm. The sequence is that of Protein SprT from Pseudomonas fluorescens (strain ATCC BAA-477 / NRRL B-23932 / Pf-5).